The following is a 78-amino-acid chain: Large ribosomal subunit protein bL28 (78 aa).

The span at 1–20 (MSRVCQLTGTRANNGMSVSH) shows a compositional bias: polar residues. The tract at residues 1–23 (MSRVCQLTGTRANNGMSVSHSHI) is disordered.

Belongs to the bacterial ribosomal protein bL28 family.

The chain is Large ribosomal subunit protein bL28 from Prochlorococcus marinus (strain NATL2A).